The chain runs to 255 residues: tRNA (guanine-N(1)-)-methyltransferase (255 aa).

S-adenosyl-L-methionine is bound by residues Gly-113 and 133 to 138 (IGDYVL).

It belongs to the RNA methyltransferase TrmD family. As to quaternary structure, homodimer.

The protein localises to the cytoplasm. It catalyses the reaction guanosine(37) in tRNA + S-adenosyl-L-methionine = N(1)-methylguanosine(37) in tRNA + S-adenosyl-L-homocysteine + H(+). Functionally, specifically methylates guanosine-37 in various tRNAs. In Escherichia coli O81 (strain ED1a), this protein is tRNA (guanine-N(1)-)-methyltransferase.